A 51-amino-acid polypeptide reads, in one-letter code: Insulin (51 aa).

3 cysteine pairs are disulfide-bonded: Cys8/Cys37, Cys20/Cys50, and Cys36/Cys41.

It belongs to the insulin family. In terms of assembly, heterodimer of a B chain and an A chain linked by two disulfide bonds.

The protein localises to the secreted. Functionally, insulin decreases blood glucose concentration. It increases cell permeability to monosaccharides, amino acids and fatty acids. It accelerates glycolysis, the pentose phosphate cycle, and glycogen synthesis in liver. The protein is Insulin of Pagrus major (Red sea bream).